The sequence spans 201 residues: MLNALGVIVSGRLVQTDFQQISDSHFLITIPDADNVNHVVVFLTGTTPFPDGMAGGVYFSWPDPNAPPNWQLLGYISNTKPSAIFKISQLKKLDEIAGQSTMMNNVFGSNLPISHIAQIGVSIEPESSLVQQTPSTTTSSTYYQFGQKIVENFFNFVSSFSITQSQMTPAPNETFVPLSTVQTWYTNFERRLQQNPNFWKN.

This sequence belongs to the OPI10 family.

This chain is Protein OPI10 homolog, found in Anopheles gambiae (African malaria mosquito).